Consider the following 269-residue polypeptide: Tryptophan synthase alpha chain (269 aa).

Residues Glu49 and Asp60 each act as proton acceptor in the active site.

Belongs to the TrpA family. As to quaternary structure, tetramer of two alpha and two beta chains.

It catalyses the reaction (1S,2R)-1-C-(indol-3-yl)glycerol 3-phosphate + L-serine = D-glyceraldehyde 3-phosphate + L-tryptophan + H2O. It participates in amino-acid biosynthesis; L-tryptophan biosynthesis; L-tryptophan from chorismate: step 5/5. In terms of biological role, the alpha subunit is responsible for the aldol cleavage of indoleglycerol phosphate to indole and glyceraldehyde 3-phosphate. The sequence is that of Tryptophan synthase alpha chain from Acidovorax sp. (strain JS42).